A 259-amino-acid polypeptide reads, in one-letter code: Ribosomal RNA small subunit methyltransferase A (259 aa).

Residues N13, T15, G40, E61, D85, and N105 each contribute to the S-adenosyl-L-methionine site.

This sequence belongs to the class I-like SAM-binding methyltransferase superfamily. rRNA adenine N(6)-methyltransferase family. RsmA subfamily.

It localises to the cytoplasm. The catalysed reaction is adenosine(1518)/adenosine(1519) in 16S rRNA + 4 S-adenosyl-L-methionine = N(6)-dimethyladenosine(1518)/N(6)-dimethyladenosine(1519) in 16S rRNA + 4 S-adenosyl-L-homocysteine + 4 H(+). Its function is as follows. Specifically dimethylates two adjacent adenosines (A1518 and A1519) in the loop of a conserved hairpin near the 3'-end of 16S rRNA in the 30S particle. May play a critical role in biogenesis of 30S subunits. The sequence is that of Ribosomal RNA small subunit methyltransferase A from Mycoplasma genitalium (strain ATCC 33530 / DSM 19775 / NCTC 10195 / G37) (Mycoplasmoides genitalium).